The primary structure comprises 236 residues: Small ribosomal subunit protein uS2c (236 aa).

This sequence belongs to the universal ribosomal protein uS2 family.

Its subcellular location is the plastid. The protein localises to the chloroplast. The sequence is that of Small ribosomal subunit protein uS2c (rps2) from Barbarea verna (Land cress).